An 866-amino-acid chain; its full sequence is DNA mismatch repair protein MutS (866 aa).

618 to 625 (GPNMSGKS) lines the ATP pocket.

This sequence belongs to the DNA mismatch repair MutS family.

In terms of biological role, this protein is involved in the repair of mismatches in DNA. It is possible that it carries out the mismatch recognition step. This protein has a weak ATPase activity. The chain is DNA mismatch repair protein MutS from Flavobacterium psychrophilum (strain ATCC 49511 / DSM 21280 / CIP 103535 / JIP02/86).